A 385-amino-acid polypeptide reads, in one-letter code: MKRLLAFCLLFFAALGQAKVPPPARSAADAEIQRAVAAFMQQYQVPGVAVGITVDGAERYYNYGVSSRKTQAKVGANTLFEVGSVSKTFTATLASYAQVNQQLSLADHPGKYLPEMKGHDFDKVTLLNLGTHTAGGFPMQVPTQVKTDQQLTAYFQSWHPQYPAGTKRTYANPGIGMLGVIAAKSMRMPFQKAMTGVLLPKLGLTNTYLTVPPAKMAFYAQGYDDKGQPVRMSPGALWEPTYGIKTTARDLLRFVEINLDQVKVEPKLKRAIDGTHVGYYRLGEMTQGLVWEQLPYPASETSLQANSSQKVIFESNAVAALTPPRPPQANVLINKTGSTRGFGAYVAFNPARKIGIVLLMNRSVPMDGRIKLAHTILDTAGGMAK.

The first 20 residues, 1 to 20, serve as a signal peptide directing secretion; the sequence is MKRLLAFCLLFFAALGQAKV. S84 acts as the Acyl-ester intermediate in catalysis. Y170 (proton acceptor) is an active-site residue. 335–337 contacts substrate; sequence KTG.

It belongs to the class-C beta-lactamase family.

It is found in the periplasm. The enzyme catalyses a beta-lactam + H2O = a substituted beta-amino acid. Its function is as follows. This protein is a serine beta-lactamase with a substrate specificity for cephalosporins. The chain is Beta-lactamase from Lysobacter lactamgenus.